The following is a 1744-amino-acid chain: MRLLWGLIWASSFFTLSLQKPRLLLFSPSVVHLGVPLSVGVQLQDVPRGQVVKGSVFLRNPSRNNVPCSPKVDFTLSSERDFALLSLQVPLKDAKSCGLHQLLRGPEVQLVAHSPWLKDSLSRTTNIQGINLLFSSRRGHLFLQTDQPIYNPGQRVRYRVFALDQKMRPSTDTITVMVENSHGLRVRKKEVYMPSSIFQDDFVIPDISEPGTWKISARFSDGLESNSSTQFEVKKYVLPNFEVKITPGKPYILTVPGHLDEMQLDIQARYIYGKPVQGVAYVRFGLLDEDGKKTFFRGLESQTKLVNGQSHISLSKAEFQDALEKLNMGITDLQGLRLYVAAAIIESPGGEMEEAELTSWYFVSSPFSLDLSKTKRHLVPGAPFLLQALVREMSGSPASGIPVKVSATVSSPGSVPEVQDIQQNTDGSGQVSIPIIIPQTISELQLSVSAGSPHPAIARLTVAAPPSGGPGFLSIERPDSRPPRVGDTLNLNLRAVGSGATFSHYYYMILSRGQIVFMNREPKRTLTSVSVFVDHHLAPSFYFVAFYYHGDHPVANSLRVDVQAGACEGKLELSVDGAKQYRNGESVKLHLETDSLALVALGALDTALYAAGSKSHKPLNMGKVFEAMNSYDLGCGPGGGDSALQVFQAAGLAFSDGDQWTLSRKRLSCPKEKTTRKKRNVNFQKAINEKLGQYASPTAKRCCQDGVTRLPMMRSCEQRAARVQQPDCREPFLSCCQFAESLRKKSRDKGQAGLQRALEILQEEDLIDEDDIPVRSFFPENWLWRVETVDRFQILTLWLPDSLTTWEIHGLSLSKTKGLCVATPVQLRVFREFHLHLRLPMSVRRFEQLELRPVLYNYLDKNLTVSVHVSPVEGLCLAGGGGLAQQVLVPAGSARPVAFSVVPTAATAVSLKVVARGSFEFPVGDAVSKVLQIEKEGAIHREELVYELNPLDHRGRTLEIPGNSDPNMIPDGDFNSYVRVTASDPLDTLGSEGALSPGGVASLLRLPRGCGEQTMIYLAPTLAASRYLDKTEQWSTLPPETKDHAVDLIQKGYMRIQQFRKADGSYAAWLSRGSSTWLTAFVLKVLSLAQEQVGGSPEKLQETSNWLLSQQQADGSFQDLSPVIHRSMQGGLVGNDETVALTAFVTIALHHGLAVFQDEGAEPLKQRVEASISKASSFLGEKASAGLLGAHAAAITAYALTLTKAPADLRGVAHNNLMAMAQETGDNLYWGSVTGSQSNAVSPTPAPRNPSDPMPQAPALWIETTAYALLHLLLHEGKAEMADQAAAWLTRQGSFQGGFRSTQDTVIALDALSAYWIASHTTEERGLNVTLSSTGRNGFKSHALQLNNRQIRGLEEELQFSLGSKINVKVGGNSKGTLKVLRTYNVLDMKNTTCQDLQIEVTVKGHVEYTMEANEDYEDYEYDELPAKDDPDAPLQPVTPLQLFEGRRNRRRREAPKVVEEQESRVHYTVCIWRNGKVGLSGMAIADVTLLSGFHALRADLEKLTSLSDRYVSHFETEGPHVLLYFDSVPTSRECVGFEAVQEVPVGLVQPASATLYDYYNPERRCSVFYGAPSKSRLLATLCSAEVCQCAEGKCPRQRRALERGLQDEDGYRMKFACYYPRVEYGFQVKVLREDSRAAFRLFETKITQVLHFTKDVKAAANQMRNFLVRASCRLRLEPGKEYLIMGLDGATYDLEGHPQYLLDSNSWIEEMPSERLCRSTRQRAACAQLNDFLQEYGTQGCQV.

Residues 1–19 (MRLLWGLIWASSFFTLSLQ) form the signal peptide. C68 and C97 are disulfide-bonded. N-linked (GlcNAc...) asparagine glycosylation is present at N226. A disulfide bridge connects residues C635 and C669. The propeptide occupies 676-679 (RKKR). 3 disulfides stabilise this stretch: C702-C728, C703-C735, and C716-C736. The Anaphylatoxin-like domain maps to 702 to 736 (CCQDGVTRLPMMRSCEQRAARVQQPDCREPFLSCC). The N-linked (GlcNAc...) asparagine glycan is linked to N862. The residue at position 918 (S918) is a Phosphoserine. Positions 1010-1013 (CGEQ) form a cross-link, isoglutamyl cysteine thioester (Cys-Gln). N-linked (GlcNAc...) asparagine glycosylation is found at N1328 and N1391. Residues Y1417, Y1420, and Y1422 each carry the sulfotyrosine modification. A propeptide spanning residues 1447–1453 (RRNRRRR) is cleaved from the precursor. 5 cysteine pairs are disulfide-bonded: C1471–C1535, C1583–C1588, C1595–C1673, C1618–C1742, and C1718–C1727. The region spanning 1595-1742 (CPRQRRALER…FLQEYGTQGC (148 aa)) is the NTR domain.

In terms of assembly, in absence of complement activation, circulates in blood as a disulfide-linked trimer of an alpha, beta and gamma chain. As to quaternary structure, complement C4b is composed of complement C4b-A, complement C4 beta and complement C4 gamma chains that are associated via disulfide bonds. Non-enzymatic component of the C3 convertase, also named C4bC2b, composed of the serine protease complement C2b (C2), as well as complement C4b. Non-enzymatic component of the C5 convertase, also named C4bC2bC3b, composed of the serine protease complement C2b (C2), complement C3b, as well as complement C4b. Interacts with CR1 (via Sushi 1 and Sushi 2 domains). (Microbial infection) Binds B.burgdorferi OspC, the interaction is inhibited by complement factor C2. This binding may inhibit the complement cascade and allow the bacteria to survive in the host bloodstream. In terms of processing, prior to secretion, the single-chain precursor is enzymatically cleaved by plasminogen (PLG) to yield non-identical chains alpha, beta and gamma. During activation of the complement systems, the alpha chain is cleaved into C4a and C4b by different proteases depending on the complement pathway: C4b stays linked to the beta and gamma chains, while C4a is released in the plasma. The alpha chain is cleaved by C1S to generate C4a and C4b following activation by the classical complement system. The alpha chain is cleaved to generate C4a and C4b by MASP2 following activation by the lectin complement system. The alpha chain is cleaved by GZMK to generate C4a and C4b following activation by the GZMK complement system. Further degradation of C4b by C1 into the inactive fragments C4c and C4d blocks the generation of C3 convertase. The proteolytic cleavages often are incomplete so that many structural forms can be found in plasma. Upon activation, the internal thioester bond reacts with carbohydrate antigens on the target surface to form amide or ester bonds, leading to covalent association with the surface of pathogens. Post-translationally, complement C4b interacts with complement C3b via a thioester linkage. In terms of processing, N- and O-glycosylated. O-glycosylated with a core 1 or possibly core 8 glycan. Complement component C4 is expressed at highest levels in the liver, at moderate levels in the adrenal cortex, adrenal medulla, thyroid gland, and the kidney, and at lowest levels in the heart, ovary, small intestine, thymus, pancreas and spleen. The extra-hepatic sites of expression may be important for the local protection and inflammatory response.

It localises to the secreted. It is found in the synapse. The protein resides in the cell projection. Its subcellular location is the axon. The protein localises to the dendrite. It localises to the cell surface. Precursor of non-enzymatic components of the classical, lectin and GZMK complement pathways, which consist in a cascade of proteins that leads to phagocytosis and breakdown of pathogens and signaling that strengthens the adaptive immune system. Its function is as follows. Non-enzymatic component of C3 and C5 convertases. Generated following cleavage by complement proteases (C1S, MASP2 or GZMK, depending on the complement pathway), it covalently attaches to the surface of pathogens, where it acts as an opsonin that marks the surface of antigens for removal. It then recruits the serine protease complement C2b to form the C3 and C5 convertases, which cleave and activate C3 and C5, respectively, the next components of the complement pathways. Complement C4b-B isotype catalyzes the transacylation of the thioester carbonyl group to form ester bonds with carbohydrate antigens, while C4b-A isotype is responsible for effective binding to form amide bonds with immune aggregates or protein antigens. In terms of biological role, putative humoral mediator released following cleavage by complement proteases (C1S, MASP2 or GZMK, depending on the complement pathway). While it is strongly similar to anaphylatoxins, its role is unclear. Was reported to act as a mediator of local inflammatory process; however these effects were probably due to contamination with C3a and/C5a anaphylatoxins in biological assays. This is Complement C4-B from Homo sapiens (Human).